Here is a 195-residue protein sequence, read N- to C-terminus: ATP-dependent Clp protease proteolytic subunit (195 aa).

Residue Ser99 is the Nucleophile of the active site. His124 is a catalytic residue.

This sequence belongs to the peptidase S14 family. In terms of assembly, fourteen ClpP subunits assemble into 2 heptameric rings which stack back to back to give a disk-like structure with a central cavity, resembling the structure of eukaryotic proteasomes.

The protein resides in the cytoplasm. It carries out the reaction Hydrolysis of proteins to small peptides in the presence of ATP and magnesium. alpha-casein is the usual test substrate. In the absence of ATP, only oligopeptides shorter than five residues are hydrolyzed (such as succinyl-Leu-Tyr-|-NHMec, and Leu-Tyr-Leu-|-Tyr-Trp, in which cleavage of the -Tyr-|-Leu- and -Tyr-|-Trp bonds also occurs).. Cleaves peptides in various proteins in a process that requires ATP hydrolysis. Has a chymotrypsin-like activity. Plays a major role in the degradation of misfolded proteins. The sequence is that of ATP-dependent Clp protease proteolytic subunit from Desulforamulus reducens (strain ATCC BAA-1160 / DSM 100696 / MI-1) (Desulfotomaculum reducens).